The primary structure comprises 140 residues: Transcription antitermination protein NusB (140 aa).

Belongs to the NusB family.

In terms of biological role, involved in transcription antitermination. Required for transcription of ribosomal RNA (rRNA) genes. Binds specifically to the boxA antiterminator sequence of the ribosomal RNA (rrn) operons. The sequence is that of Transcription antitermination protein NusB from Pseudothermotoga lettingae (strain ATCC BAA-301 / DSM 14385 / NBRC 107922 / TMO) (Thermotoga lettingae).